The primary structure comprises 323 residues: tRNA dimethylallyltransferase (323 aa).

12–19 (GPTASGKT) lines the ATP pocket. 14-19 (TASGKT) serves as a coordination point for substrate. 2 interaction with substrate tRNA regions span residues 37-40 (DSAL) and 161-165 (QRLVR).

This sequence belongs to the IPP transferase family. In terms of assembly, monomer. The cofactor is Mg(2+).

It catalyses the reaction adenosine(37) in tRNA + dimethylallyl diphosphate = N(6)-dimethylallyladenosine(37) in tRNA + diphosphate. Its function is as follows. Catalyzes the transfer of a dimethylallyl group onto the adenine at position 37 in tRNAs that read codons beginning with uridine, leading to the formation of N6-(dimethylallyl)adenosine (i(6)A). The chain is tRNA dimethylallyltransferase from Stutzerimonas stutzeri (strain A1501) (Pseudomonas stutzeri).